A 444-amino-acid chain; its full sequence is MKAVEANFDGLVGPTHNYSGLSVGNIASKNNKAGASNPKQAVKQGLEKMKALHDMGFVQGVLAPQERPDIATLRRLGFSGSDANVLQQSHQYSPQLLAACSSASSMWTANAATVSPSSDTADGKVHFTPANLINKFHRSIEDEVTGNILKATFADEKHFSHHEALPHSDYFGDEGAANHTRFCNEYGEQGVEFFVFGKSAFNDRYPAPKKYPARQTLEASEAIARTHGLRDKFTVFAQQNPDVIDQGVFHNDVIAVGNKNTLFCHQQAFLNQEQVKSDLSASYGSGFNVIEVPTDKVSLQDAVETYLFNSQLVTKSDGKTLIILPQHCRENPRVWAYLNELVEQKRGIDELHTFDLKQSMQNGGGPACLRLRVVLNEAEQQAVNQQTLMNDMLFSTLNAWADKHYRDRIEDKDLADPQLLLESRAALDELTQIMKLGSVYPFQR.

Residues 19-28, N110, and 137-138 contribute to the substrate site; these read SGLSVGNIAS and HR. The active site involves E174. R214 lines the substrate pocket. Residue H250 is part of the active site. 2 residues coordinate substrate: D252 and N362. C368 functions as the Nucleophile in the catalytic mechanism.

Belongs to the succinylarginine dihydrolase family. As to quaternary structure, homodimer.

It carries out the reaction N(2)-succinyl-L-arginine + 2 H2O + 2 H(+) = N(2)-succinyl-L-ornithine + 2 NH4(+) + CO2. Its pathway is amino-acid degradation; L-arginine degradation via AST pathway; L-glutamate and succinate from L-arginine: step 2/5. Its function is as follows. Catalyzes the hydrolysis of N(2)-succinylarginine into N(2)-succinylornithine, ammonia and CO(2). The polypeptide is N-succinylarginine dihydrolase (Aliivibrio salmonicida (strain LFI1238) (Vibrio salmonicida (strain LFI1238))).